A 424-amino-acid chain; its full sequence is MDKFRVYGQSRLSGSVNISGAKNAALPILFAAILATEPVKLTNVPELKDIETTLNILRQLGVIANRDETGAVLLDASNINHFTAPYELVKTMRASIWALAPLVARFHQGQVSLPGGCSIGARPVDLHISGLEKLGADIVLEEGYVKAQVSDRLVGTRIVIEKVSVGATLSIMMAATLAKGTTVIENAAREPEIVDTADFLNKMGAKITGAGSDHITIEGVERLTGCEHSVVPDRIETGTFLIAAAISGGRVVCQNTKADTLDAVIDKLREAGAQVDVTENSITLDMLGNRPKAVNIRTAPHPGFPTDMQAQFTLLNMVAEGTSIITETIFENRFMHIPELIRMGGKAEIEGNTAVCHGVEQLSGTEVIATDLRASISLVLAGCIATGETIVDRIYHIDRGYEHIEDKLRGLGAKIERFSGSDEA.

22–23 (KN) lines the phosphoenolpyruvate pocket. R93 contacts UDP-N-acetyl-alpha-D-glucosamine. The Proton donor role is filled by C117. The residue at position 117 (C117) is a 2-(S-cysteinyl)pyruvic acid O-phosphothioketal. Residues 122 to 126 (RPVDL), 162 to 165 (KVSV), D307, and I329 each bind UDP-N-acetyl-alpha-D-glucosamine.

The protein belongs to the EPSP synthase family. MurA subfamily.

The protein localises to the cytoplasm. It carries out the reaction phosphoenolpyruvate + UDP-N-acetyl-alpha-D-glucosamine = UDP-N-acetyl-3-O-(1-carboxyvinyl)-alpha-D-glucosamine + phosphate. It participates in cell wall biogenesis; peptidoglycan biosynthesis. Its function is as follows. Cell wall formation. Adds enolpyruvyl to UDP-N-acetylglucosamine. In Haemophilus influenzae (strain PittEE), this protein is UDP-N-acetylglucosamine 1-carboxyvinyltransferase.